Consider the following 523-residue polypeptide: Synaptotagmin-10 (523 aa).

Over 1 to 55 (MSFHKEDGVNSLCQKALHIVTELCFAGQVEWEKCSGIFPRDRGSQGGSSTDISVS) the chain is Vesicular. The cysteine motif stretch occupies residues 13–35 (CQKALHIVTELCFAGQVEWEKCS). Residues 56-76 (LLAVVVSFCGLALLVVSLFVF) traverse the membrane as a helical segment. Residues 77–523 (WKLCWPCWKS…CPSPKPPSTP (447 aa)) lie on the Cytoplasmic side of the membrane. Threonine 136 bears the Phosphothreonine mark. 2 C2 domains span residues 231–352 (ICGK…TVWK) and 363–496 (DLGE…THWH). 11 residues coordinate Ca(2+): aspartate 262, aspartate 268, aspartate 320, phenylalanine 321, aspartate 322, serine 325, aspartate 328, aspartate 394, aspartate 400, aspartate 454, and aspartate 456.

The protein belongs to the synaptotagmin family. As to quaternary structure, homodimer; disulfide-linked via the cysteine motif. Can also form heterodimers with SYT3, SYT6, SYT7 and SYT9. It depends on Ca(2+) as a cofactor.

The protein localises to the cytoplasmic vesicle. It is found in the secretory vesicle membrane. Its function is as follows. Ca(2+) sensor specifically required for the Ca(2+)-dependent exocytosis of secretory vesicles containing IGF1 in neurons of the olfactory bulb. Exocytosis of IGF1 is required for sensory perception of smell. Not involved in Ca(2+)-dependent synaptic vesicle exocytosis. Acts through Ca(2+) and phospholipid binding to the C2 domain: Ca(2+) induces binding of the C2-domains to phospholipid membranes and to assembled SNARE-complexes; both actions contribute to triggering exocytosis. This chain is Synaptotagmin-10 (SYT10), found in Pongo abelii (Sumatran orangutan).